Reading from the N-terminus, the 542-residue chain is Sodium/hydrogen exchanger 8 (542 aa).

11 consecutive transmembrane segments (helical) span residues 55 to 75, 79 to 99, 118 to 138, 151 to 171, 186 to 206, 256 to 276, 306 to 326, 349 to 369, 374 to 394, 412 to 432, and 446 to 466; these read EQSS…CIIL, LIRY…LGIL, EEMF…IFES, IGSI…VVGG, NMTD…VATI, TFLQ…ALGT, AYLP…VFAF, LVLF…NFFR, TPKM…PYAL, TTIV…MPLI, and NKKD…ESEH. The residue at position 471 (T471) is a Phosphothreonine. S532 and S534 each carry phosphoserine.

This sequence belongs to the monovalent cation:proton antiporter 1 (CPA1) transporter (TC 2.A.36) family.

The protein resides in the golgi apparatus membrane. Its subcellular location is the golgi apparatus. It is found in the trans-Golgi network membrane. It localises to the endosome. The protein localises to the multivesicular body membrane. The protein resides in the apical cell membrane. Its subcellular location is the cytoplasmic vesicle. It is found in the secretory vesicle. It localises to the acrosome. It carries out the reaction Na(+)(in) + H(+)(out) = Na(+)(out) + H(+)(in). Na(+)/H(+) antiporter. Mediates the electoneutral exchange of intracellular H(+) ions for extracellular Na(+) in 1:1 stoichiometry. Acts as an Na(+)/H(+) exchanger in the trans-Golgi. Contributes to the regulation of pH regulation of Golgi apparatus, and consequently, in protein trafficking and endosomal morphology. In germ cells, plays a crucial role in acrosome biogenesis and sperm development, probably by playing a role in the fusion of the Golgi-derived vesicles that form the acrosomal cap. Can also be active at the cell surface of specialized cells. In the small intestine, at the cell membrane, plays a major physiological role in transepithelial absorption of Na(+) and regulates intracellular pH homeostasis of intestinal epithelial cells. Acts as an important regulator of mucosal integrity in the intestine and in the stomach, could mediate the pH fluctuation necessary for mucin exocytosis or assist membrane trafficking of other proteins. Plays a role in photoreceptor survival and in the maintenance of intracellular pH homeostasis in retinal pigment epithelium (RPE cells). This is Sodium/hydrogen exchanger 8 (SLC9A8) from Macaca fascicularis (Crab-eating macaque).